We begin with the raw amino-acid sequence, 123 residues long: Large ribosomal subunit protein uL18 (123 aa).

The protein belongs to the universal ribosomal protein uL18 family. As to quaternary structure, part of the 50S ribosomal subunit; part of the 5S rRNA/L5/L18/L25 subcomplex. Contacts the 5S and 23S rRNAs.

Its function is as follows. This is one of the proteins that bind and probably mediate the attachment of the 5S RNA into the large ribosomal subunit, where it forms part of the central protuberance. This is Large ribosomal subunit protein uL18 from Chlamydia trachomatis serovar A (strain ATCC VR-571B / DSM 19440 / HAR-13).